The following is a 262-amino-acid chain: Phosphate import ATP-binding protein PstB (262 aa).

An ABC transporter domain is found at 15–257; sequence AKASNLNLWY…PQKSKTEQYI (243 aa). 47-54 is a binding site for ATP; sequence GPSGCGKS.

Belongs to the ABC transporter superfamily. Phosphate importer (TC 3.A.1.7) family. In terms of assembly, the complex is composed of two ATP-binding proteins (PstB), two transmembrane proteins (PstC and PstA) and a solute-binding protein (PstS).

It is found in the cell inner membrane. The catalysed reaction is phosphate(out) + ATP + H2O = ADP + 2 phosphate(in) + H(+). Functionally, part of the ABC transporter complex PstSACB involved in phosphate import. Responsible for energy coupling to the transport system. This chain is Phosphate import ATP-binding protein PstB, found in Wolinella succinogenes (strain ATCC 29543 / DSM 1740 / CCUG 13145 / JCM 31913 / LMG 7466 / NCTC 11488 / FDC 602W) (Vibrio succinogenes).